The primary structure comprises 110 residues: UPF0122 protein SH1678 (110 aa).

It belongs to the UPF0122 family.

Might take part in the signal recognition particle (SRP) pathway. This is inferred from the conservation of its genetic proximity to ftsY/ffh. May be a regulatory protein. The sequence is that of UPF0122 protein SH1678 from Staphylococcus haemolyticus (strain JCSC1435).